An 86-amino-acid polypeptide reads, in one-letter code: Large ribosomal subunit protein uL23 (86 aa).

This sequence belongs to the universal ribosomal protein uL23 family. As to quaternary structure, part of the 50S ribosomal subunit. Contacts protein L29.

In terms of biological role, binds to 23S rRNA. One of the proteins that surrounds the polypeptide exit tunnel on the outside of the ribosome. This Methanobrevibacter smithii (strain ATCC 35061 / DSM 861 / OCM 144 / PS) protein is Large ribosomal subunit protein uL23.